A 527-amino-acid polypeptide reads, in one-letter code: Probable protein kinase UbiB (527 aa).

The Protein kinase domain occupies 118–501 (DFERVPVASA…QKRTNRLLQG (384 aa)). ATP-binding positions include 124–132 (VASASIAQV) and Lys150. Asp285 (proton acceptor) is an active-site residue. Residues 502–522 (LLMFGVAVGVGAVLARAWLAI) form a helical membrane-spanning segment.

It belongs to the ABC1 family. UbiB subfamily.

Its subcellular location is the cell inner membrane. It participates in cofactor biosynthesis; ubiquinone biosynthesis [regulation]. In terms of biological role, is probably a protein kinase regulator of UbiI activity which is involved in aerobic coenzyme Q (ubiquinone) biosynthesis. This is Probable protein kinase UbiB from Paraburkholderia phymatum (strain DSM 17167 / CIP 108236 / LMG 21445 / STM815) (Burkholderia phymatum).